A 965-amino-acid chain; its full sequence is FKBP12-associated protein 1 (965 aa).

The RING-type; degenerate zinc-finger motif lies at 68–118 (CMICTVEMDYTCQMFACKRCYRVFDYGCIREWALKSTEKTVDRIWKCPNCY). 5 consecutive NF-X1-type zinc fingers follow at residues 159 to 177 (CMHG…ECTR), 216 to 235 (CSIH…PCPE), 362 to 382 (CGKH…PCLQ), 468 to 487 (CGIH…PCLE), and 586 to 606 (CYHT…VCKQ). The 64-residue stretch at 733-796 (ERWCSQIEAI…MRSVFIKKED (64 aa)) folds into the R3H domain. Threonine 951 carries the post-translational modification Phosphothreonine. Phosphoserine is present on serine 958.

It belongs to the NFX1 family. In terms of assembly, interacts with FPR1.

The protein resides in the cytoplasm. Its subcellular location is the nucleus. Its function is as follows. May play a role in transcription regulation. The chain is FKBP12-associated protein 1 (FAP1) from Saccharomyces cerevisiae (strain ATCC 204508 / S288c) (Baker's yeast).